The chain runs to 377 residues: NIF3-like protein 1 (377 aa).

Lys109 bears the N6-acetyllysine mark. The tract at residues 244 to 377 is mediates interaction with COPS2; the sequence is LLLYTGMGRL…ETDRDPLHVI (134 aa). Position 255 is a phosphothreonine (Thr255). Ser259 bears the Phosphoserine mark.

Belongs to the GTP cyclohydrolase I type 2/NIF3 family. As to quaternary structure, homodimer. Interacts with COPS2. Interacts with THOC7.

Its subcellular location is the cytoplasm. The protein resides in the nucleus. In terms of biological role, may function as a transcriptional corepressor through its interaction with COPS2, negatively regulating the expression of genes involved in neuronal differentiation. The polypeptide is NIF3-like protein 1 (Bos taurus (Bovine)).